A 1453-amino-acid polypeptide reads, in one-letter code: Chromatin remodeling regulator CECR2 (1453 aa).

The interval 170–237 (VQGRSNGELS…DLQTRNGSRG (68 aa)) is disordered. A compositionally biased stretch (basic residues) spans 197–209 (TGKRRGRPPKRKK). Residues 210-222 (LQEEIISSEKQEE) show a composition bias toward basic and acidic residues. Residues 223 to 234 (NSLTSDLQTRNG) are compositionally biased toward polar residues. Ser402 carries the post-translational modification Phosphoserine. One can recognise a Bromo domain in the interval 414-518 (FELDDDFTAM…RCFHRAMTKH (105 aa)). Position 526 is a phosphothreonine (Thr526). Disordered stretches follow at residues 536–667 (EKRE…HPPF), 767–796 (HGTTNPGRLGPDEKPHLGPGPSHHPHTLGH), 827–868 (GYMQ…GESM), 884–1020 (VCPP…DNSY), 1046–1072 (VVGEASPCRSEGKGLDGSGSEKPLCPR), 1131–1308 (LASM…YLYG), 1331–1368 (MLQTGSPYTPQRSASHFQPRAYPSPVPAHPPPHPVATQ), and 1396–1453 (QTGT…LDQS). Residue Ser551 is modified to Phosphoserine. Over residues 637-649 (GSLQGSDPTNLHG) the composition is skewed to polar residues. Over residues 655–664 (EAPPGEPLQH) the composition is skewed to pro residues. Pro residues predominate over residues 887–905 (PGVPYHPRQPTPPQLPGPF). Residue Ser983 is modified to Phosphoserine. The segment covering 985-998 (QERETEDSQLKSDA) has biased composition (basic and acidic residues). Residues 999-1020 (SDSADTYKTSKNKNTWPLDNSY) are compositionally biased toward polar residues. 2 positions are modified to asymmetric dimethylarginine: Arg1166 and Arg1172. Low complexity-rich tracts occupy residues 1173–1187 (YSYQPPSQPSYHPYQ) and 1202–1211 (QRSLPSQRSP). Polar residues predominate over residues 1228–1250 (NVLSSLQGCETLNTALTSPTQMD). The span at 1265–1289 (GPEEEKMDESVERPESPKEFLDLDN) shows a compositional bias: basic and acidic residues. Ser1280 bears the Phosphoserine mark. Polar residues-rich tracts occupy residues 1291–1304 (NAATKRQNSLSTSD) and 1331–1346 (MLQTGSPYTPQRSASH). Over residues 1352-1364 (YPSPVPAHPPPHP) the composition is skewed to pro residues.

As to quaternary structure, component of the CERF-1 ISWI chromatin remodeling complex (also called the CECR2-containing remodeling factor (CERF) complex) at least composed of CECR2 and SMARCA1. Component of the CERF-5 ISWI chromatin remodeling complex at least composed of CECR2 and SMARCA5/SNF2H. LUZP1 is detected as part of the CERF-1 and CERF-5 complexes in embryonic stem (ES) cells where it is involved in complex stabilization but is not detected in the complexes in the testis. Interacts with CCAR2; CCAR2 may form part of the CERF-1 and/or CEF-5 ISWI chromatin remodeling complexes in ES cells. Interacts with acetylated lysine residues on histone H2A and H3 (in vitro). Interacts with LRPPRC.

It localises to the nucleus. Functionally, regulatory subunit of the ATP-dependent CERF-1 and CERF-5 ISWI chromatin remodeling complexes, which form ordered nucleosome arrays on chromatin and facilitate access to DNA during DNA-templated processes such as DNA replication, transcription, and repair. The complexes do not have the ability to slide mononucleosomes to the center of a DNA template. The CERF-1 ISWI chromatin remodeling complex has a lower ATP hydrolysis rate than the CERF-5 ISWI chromatin remodeling complex. Plays a role in various processes during development: required during embryogenesis for neural tube closure and inner ear development. In adults, required for spermatogenesis, via the formation of ISWI-type chromatin complexes. In histone-modifying complexes, CECR2 recognizes and binds acylated histones: binds histones that are acetylated and/or butyrylated. May also be involved through its interaction with LRPPRC in the integration of cytoskeletal network with vesicular trafficking, nucleocytosolic shuttling, transcription, chromosome remodeling and cytokinesis. This chain is Chromatin remodeling regulator CECR2, found in Mus musculus (Mouse).